The primary structure comprises 205 residues: Holliday junction branch migration complex subunit RuvA (205 aa).

The segment at M1–R64 is domain I. The segment at T65–V143 is domain II. Residues H144–A154 form a flexible linker region. The domain III stretch occupies residues A154–K205.

This sequence belongs to the RuvA family. In terms of assembly, homotetramer. Forms an RuvA(8)-RuvB(12)-Holliday junction (HJ) complex. HJ DNA is sandwiched between 2 RuvA tetramers; dsDNA enters through RuvA and exits via RuvB. An RuvB hexamer assembles on each DNA strand where it exits the tetramer. Each RuvB hexamer is contacted by two RuvA subunits (via domain III) on 2 adjacent RuvB subunits; this complex drives branch migration. In the full resolvosome a probable DNA-RuvA(4)-RuvB(12)-RuvC(2) complex forms which resolves the HJ.

The protein localises to the cytoplasm. Its function is as follows. The RuvA-RuvB-RuvC complex processes Holliday junction (HJ) DNA during genetic recombination and DNA repair, while the RuvA-RuvB complex plays an important role in the rescue of blocked DNA replication forks via replication fork reversal (RFR). RuvA specifically binds to HJ cruciform DNA, conferring on it an open structure. The RuvB hexamer acts as an ATP-dependent pump, pulling dsDNA into and through the RuvAB complex. HJ branch migration allows RuvC to scan DNA until it finds its consensus sequence, where it cleaves and resolves the cruciform DNA. The chain is Holliday junction branch migration complex subunit RuvA from Nitrobacter winogradskyi (strain ATCC 25391 / DSM 10237 / CIP 104748 / NCIMB 11846 / Nb-255).